The following is a 283-amino-acid chain: UPF0276 protein Nmul_A2550 (283 aa).

Belongs to the UPF0276 family.

The chain is UPF0276 protein Nmul_A2550 from Nitrosospira multiformis (strain ATCC 25196 / NCIMB 11849 / C 71).